The following is a 414-amino-acid chain: Esterase FrsA (414 aa).

The protein belongs to the FrsA family.

The enzyme catalyses a carboxylic ester + H2O = an alcohol + a carboxylate + H(+). Catalyzes the hydrolysis of esters. The chain is Esterase FrsA from Escherichia coli O45:K1 (strain S88 / ExPEC).